Reading from the N-terminus, the 385-residue chain is Serine/threonine-protein kinase 52 (385 aa).

The Protein kinase domain maps to 82–356; that stretch reads LIIKTVLARG…PEMDEVVPML (275 aa). ATP is bound by residues 88–96 and Lys109; that span reads LARGTFGTV. The active-site Proton acceptor is Asp227.

This sequence belongs to the protein kinase superfamily. Ser/Thr protein kinase family. As to quaternary structure, binds to CBC1. Associates with PHOT1, PHOT2, BLUS1 and PM H(+)-ATPase (e.g. AHA1). Post-translationally, autophosphorylated. Phosphorylated by HT1 in response to low CO(2) concentrations. In terms of tissue distribution, expressed in guard cells.

It localises to the cytoplasm. The protein resides in the cytosol. The catalysed reaction is L-seryl-[protein] + ATP = O-phospho-L-seryl-[protein] + ADP + H(+). It carries out the reaction L-threonyl-[protein] + ATP = O-phospho-L-threonyl-[protein] + ADP + H(+). In terms of biological role, serine/threonine protein kinase that phosphorylates proteins on serine and threonine residues. Collectively with CBC1, acts as a negative regulator of stomatal opening, probably via the inhibition of plasma membrane-type ATPases (AHA1 and AHA2) activity in guard cells, but in an abscisic acid (ABA)-independent manner. However, at low concentrations of CO(2), together with CBC1, stimulates stomatal opening via the inhibition of S-type anion channels in response to blue light (BL) and red light (RL), thus being a key component to maximize photosynthesis in the light under low CO(2) conditions. Required for temperature decrease in leaves. Downstream target of HIGH LEAF TEMPERATURE1 (HT1) during low CO(2)-induced stomatal opening. The chain is Serine/threonine-protein kinase 52 from Arabidopsis thaliana (Mouse-ear cress).